The chain runs to 279 residues: 2-dehydro-3-deoxyphosphooctonate aldolase (279 aa).

The protein belongs to the KdsA family.

The protein resides in the cytoplasm. The enzyme catalyses D-arabinose 5-phosphate + phosphoenolpyruvate + H2O = 3-deoxy-alpha-D-manno-2-octulosonate-8-phosphate + phosphate. It participates in carbohydrate biosynthesis; 3-deoxy-D-manno-octulosonate biosynthesis; 3-deoxy-D-manno-octulosonate from D-ribulose 5-phosphate: step 2/3. Its pathway is bacterial outer membrane biogenesis; lipopolysaccharide biosynthesis. This Desulfosudis oleivorans (strain DSM 6200 / JCM 39069 / Hxd3) (Desulfococcus oleovorans) protein is 2-dehydro-3-deoxyphosphooctonate aldolase.